The sequence spans 513 residues: MHLGVEEPIRECQYNQICTHNSSPMDTPHIKKKKNKRKWQVFPGRNRFYCNGRIMMAKQTGVFYLTMVLILVTSGLFFAFDCPFLASNLTPAIPAIGGVLFVFVMGMLLRASFSDPGVLPRATPEEAADIERQIDANNGPSGPGYRPPPRTREVLINGQTVKLKYCFTCKIFRPPRASHCSLCDNCVDRFDHHCPWVGNCVGRRNYRFFYLFILSLSFLTIFIFAFVITHVILNALRKALALSTAADFEAVQKDPTGLAFLVLSKTALLDILEVVVCFFSVWSIVGLSGFHTYLISSNQTTNEDIKGSWSSKRGKGNYNPYSYGNFITNCCSALCGPLPPSLIDRRGFIQPDTPQPATQTNGTSACPPNQVQSHMCAQDQCIQSTKFVLQAATNPLLHSQPVILGGGPPLQAKTSLGGPCSTMGPPQPSLPSSIPGLSCGGELMALRDSEIHCHHHLHHQHFISPEETPSPPAPLPCATHLGHHVHPAQLFDPVSQDSLHEDSVRGLVKLSSV.

Over 1–59 the chain is Cytoplasmic; it reads MHLGVEEPIRECQYNQICTHNSSPMDTPHIKKKKNKRKWQVFPGRNRFYCNGRIMMAKQ. Residues 60–80 traverse the membrane as a helical segment; it reads TGVFYLTMVLILVTSGLFFAF. The Lumenal segment spans residues 81–88; it reads DCPFLASN. The chain crosses the membrane as a helical span at residues 89–109; the sequence is LTPAIPAIGGVLFVFVMGMLL. Topologically, residues 110-207 are cytoplasmic; sequence RASFSDPGVL…GNCVGRRNYR (98 aa). The DHHC domain maps to 164-214; the sequence is KYCFTCKIFRPPRASHCSLCDNCVDRFDHHCPWVGNCVGRRNYRFFYLFIL. Catalysis depends on C194, which acts as the S-palmitoyl cysteine intermediate. A helical transmembrane segment spans residues 208–228; that stretch reads FFYLFILSLSFLTIFIFAFVI. Over 229–266 the chain is Lumenal; sequence THVILNALRKALALSTAADFEAVQKDPTGLAFLVLSKT. The helical transmembrane segment at 267-287 threads the bilayer; it reads ALLDILEVVVCFFSVWSIVGL. The Cytoplasmic portion of the chain corresponds to 288-513; the sequence is SGFHTYLISS…VRGLVKLSSV (226 aa). A disordered region spans residues 348-369; that stretch reads FIQPDTPQPATQTNGTSACPPN. The span at 355–369 shows a compositional bias: polar residues; sequence QPATQTNGTSACPPN.

This sequence belongs to the DHHC palmitoyltransferase family. ERF2/ZDHHC9 subfamily.

It localises to the endoplasmic reticulum membrane. Its subcellular location is the golgi apparatus membrane. The catalysed reaction is L-cysteinyl-[protein] + hexadecanoyl-CoA = S-hexadecanoyl-L-cysteinyl-[protein] + CoA. Palmitoyltransferase that could catalyze the addition of palmitate onto various protein substrates. The protein is Palmitoyltransferase ZDHHC14 (zdhhc14) of Danio rerio (Zebrafish).